We begin with the raw amino-acid sequence, 153 residues long: Protein ripply2.2 (153 aa).

A WRPW motif; required for transcriptional repression and interaction with tle4 motif is present at residues 58–61 (WRPW). The interval 93–128 (HPVRLFWPKSKLLDNTYQEAADLLRNFPVQATISLY) is ripply homology domain. The disordered stretch occupies residues 127–153 (LYNDSESDTDNEEDSSEEEQDSGFESE). Residues 131-153 (SESDTDNEEDSSEEEQDSGFESE) show a composition bias toward acidic residues.

Belongs to the ripply family. As to quaternary structure, interacts with tle4 and tbx6, and mediates interaction between these proteins. Expressed in the presomitic mesoderm (PSM) in the anterior halves of somitomeres S-I, S-II and S-III.

The protein resides in the nucleus. In terms of biological role, required during somitogenesis for the formation of somite boundaries. Represses the expression of genes involved in somite segmentation by acting with the corepressor tle4 to down-regulate the transcriptional activity of tbx6. May act by regulating the activity of tle4. Represses transcription of delta2, thy1 and ripply2.2/bowline itself. The chain is Protein ripply2.2 (ripply2.2) from Xenopus laevis (African clawed frog).